The following is a 164-amino-acid chain: Disulfide bond formation protein B (164 aa).

The Cytoplasmic segment spans residues 1–4 (MRII). A helical transmembrane segment spans residues 5–21 (FLLIALICAGLVSYALY). At 22 to 39 (LQLADGLLPCPLCIFQRM) the chain is on the periplasmic side. A disulfide bridge connects residues Cys-31 and Cys-34. A helical transmembrane segment spans residues 40 to 56 (AYWLVGITALFAFIHHP). Residues 57-62 (QRLGRR) lie on the Cytoplasmic side of the membrane. Residues 63–80 (IYCGLIILFSLAGAIVAG) traverse the membrane as a helical segment. The Periplasmic segment spans residues 81-136 (RQAWLVRFPEAFECGISPEEAFLNELPLARWWPDMFEANGDCTDGTWQFLSLTIPD). Residues Cys-94 and Cys-122 are joined by a disulfide bond. The chain crosses the membrane as a helical span at residues 137–155 (WSLLIFLAFSLIAGLLWRS). Residues 156–164 (RSISSSNLK) are Cytoplasmic-facing.

This sequence belongs to the DsbB family.

It localises to the cell inner membrane. Functionally, required for disulfide bond formation in some periplasmic proteins. Acts by oxidizing the DsbA protein. This Nitrosomonas europaea (strain ATCC 19718 / CIP 103999 / KCTC 2705 / NBRC 14298) protein is Disulfide bond formation protein B.